A 258-amino-acid polypeptide reads, in one-letter code: Octanoyltransferase (258 aa).

Positions 42-226 (NVGTDTLLLL…AVVAALDGEL (185 aa)) constitute a BPL/LPL catalytic domain. Substrate-binding positions include 80-87 (RGGKITWH), 156-158 (AIG), and 169-171 (GFS). Catalysis depends on C187, which acts as the Acyl-thioester intermediate.

This sequence belongs to the LipB family.

The protein localises to the cytoplasm. The catalysed reaction is octanoyl-[ACP] + L-lysyl-[protein] = N(6)-octanoyl-L-lysyl-[protein] + holo-[ACP] + H(+). The protein operates within protein modification; protein lipoylation via endogenous pathway; protein N(6)-(lipoyl)lysine from octanoyl-[acyl-carrier-protein]: step 1/2. Catalyzes the transfer of endogenously produced octanoic acid from octanoyl-acyl-carrier-protein onto the lipoyl domains of lipoate-dependent enzymes. Lipoyl-ACP can also act as a substrate although octanoyl-ACP is likely to be the physiological substrate. This Rhodococcus jostii (strain RHA1) protein is Octanoyltransferase.